The sequence spans 782 residues: Coiled-coil alpha-helical rod protein 1 (782 aa).

Composition is skewed to basic and acidic residues over residues 62–74 and 208–218; these read ERDV…EPGR and ETRRAGEAKEL. Disordered regions lie at residues 62–82 and 185–218; these read ERDV…WGLE and AHKE…AKEL. 3 coiled-coil regions span residues 82–314, 344–398, and 498–691; these read EGSQ…ELTR, LMVQ…EVER, and VTDV…QQEG.

It localises to the cytoplasm. It is found in the nucleus. May be a regulator of keratinocyte proliferation or differentiation. This Gorilla gorilla gorilla (Western lowland gorilla) protein is Coiled-coil alpha-helical rod protein 1 (CCHCR1).